A 305-amino-acid chain; its full sequence is Oxidoreductase OpS7 (305 aa).

The protein belongs to the oxidoreductase OpS7 family.

The protein operates within secondary metabolite biosynthesis. In terms of biological role, oxidoreductase; part of the gene cluster that mediates the biosynthesis of the bibenzoquinone oosporein, a metabolite required for fungal virulence that acts by evading host immunity to facilitate fungal multiplication in insects. The non-reducing polyketide synthase OpS1 produces orsellinic acid by condensing acetyl-CoA with 3 malonyl-CoA units. Orsellinic acid is then hydroxylated to benzenetriol by the hydroxylase OpS4. The intermediate is oxidized either nonenzymatically to 5,5'-dideoxy-oosporein or enzymatically to benzenetetrol by the oxidoreductase OpS7. The latter is further dimerized to oosporein by the catalase OpS5. OpS6 probably functions en route for protecting cells against oxidative stress by scavenging any leaked free radical form of benzenetetrol by activating the thiol group of glutathione. This chain is Oxidoreductase OpS7, found in Beauveria bassiana (strain ARSEF 2860) (White muscardine disease fungus).